Here is a 423-residue protein sequence, read N- to C-terminus: tRNA-dihydrouridine(16/17) synthase [NAD(P)(+)] (423 aa).

An N-acetylthreonine modification is found at Thr2. FMN-binding positions include 35-37 (PMV) and Gln92. Residue Cys121 is the Proton donor of the active site. FMN is bound by residues Lys160, His188, 223–225 (NGN), and 247–248 (AE). Residues 404–423 (KKRKADVPLESADKKKDVKA) form a disordered region. Residues 408-423 (ADVPLESADKKKDVKA) show a composition bias toward basic and acidic residues.

The protein belongs to the Dus family. Dus1 subfamily. As to quaternary structure, monomer. The cofactor is FMN.

It catalyses the reaction 5,6-dihydrouridine(16) in tRNA + NADP(+) = uridine(16) in tRNA + NADPH + H(+). It carries out the reaction 5,6-dihydrouridine(16) in tRNA + NAD(+) = uridine(16) in tRNA + NADH + H(+). The enzyme catalyses 5,6-dihydrouridine(17) in tRNA + NAD(+) = uridine(17) in tRNA + NADH + H(+). The catalysed reaction is 5,6-dihydrouridine(17) in tRNA + NADP(+) = uridine(17) in tRNA + NADPH + H(+). It catalyses the reaction a 5,6-dihydrouridine in mRNA + NAD(+) = a uridine in mRNA + NADH + H(+). It carries out the reaction a 5,6-dihydrouridine in mRNA + NADP(+) = a uridine in mRNA + NADPH + H(+). Functionally, catalyzes the synthesis of dihydrouridine, a modified base found in the D-loop of most tRNAs. Specifically modifies U16 and U17 in cytoplasmic tRNAs. Also able to mediate dihydrouridylation of some mRNAs, thereby affecting their translation. The protein is tRNA-dihydrouridine(16/17) synthase [NAD(P)(+)] of Saccharomyces cerevisiae (strain ATCC 204508 / S288c) (Baker's yeast).